Reading from the N-terminus, the 427-residue chain is Queuine tRNA-ribosyltransferase catalytic subunit (427 aa).

Aspartate 99 acts as the Proton acceptor in catalysis. Substrate contacts are provided by residues 99–103 (DSGGF), aspartate 153, glutamine 196, and glycine 223. The RNA binding stretch occupies residues 254–260 (GVGFAAD). The active-site Nucleophile is the aspartate 273. Residues 278–282 (TRTAR) form an RNA binding; important for wobble base 34 recognition region. The Zn(2+) site is built by cysteine 311, cysteine 313, cysteine 316, and histidine 341. The segment at 395 to 427 (PADPERIDEQDQKPKTEKRRETEDVAEEQVASS) is disordered. Residues 397–417 (DPERIDEQDQKPKTEKRRETE) are compositionally biased toward basic and acidic residues.

The protein belongs to the queuine tRNA-ribosyltransferase family. Heterodimer of a catalytic subunit and an accessory subunit. The cofactor is Zn(2+).

It is found in the cytoplasm. The enzyme catalyses guanosine(34) in tRNA + queuine = queuosine(34) in tRNA + guanine. Functionally, catalytic subunit of the queuine tRNA-ribosyltransferase (TGT) that catalyzes the base-exchange of a guanine (G) residue with queuine (Q) at position 34 (anticodon wobble position) in tRNAs with GU(N) anticodons (tRNA-Asp, -Asn, -His and -Tyr), resulting in the hypermodified nucleoside queuosine (7-(((4,5-cis-dihydroxy-2-cyclopenten-1-yl)amino)methyl)-7-deazaguanosine). Catalysis occurs through a double-displacement mechanism. The nucleophile active site attacks the C1' of nucleotide 34 to detach the guanine base from the RNA, forming a covalent enzyme-RNA intermediate. The proton acceptor active site deprotonates the incoming queuine, allowing a nucleophilic attack on the C1' of the ribose to form the product. The protein is Queuine tRNA-ribosyltransferase catalytic subunit (Tgt) of Drosophila melanogaster (Fruit fly).